Here is a 781-residue protein sequence, read N- to C-terminus: Tax1-binding protein 1 homolog A (781 aa).

Coiled-coil stretches lie at residues 148 to 453 (NSDI…QGDA) and 488 to 581 (DVEK…YMRE). The span at 441-465 (KLTQQQETQQGDANRNDASTETTLE) shows a compositional bias: polar residues. Disordered stretches follow at residues 441-510 (KLTQ…EEEC) and 630-691 (ETRD…EAPA). The span at 484–495 (TVARDVEKSRDE) shows a compositional bias: basic and acidic residues. The span at 496–510 (EGNEQEEEDEEEEEC) shows a compositional bias: acidic residues. The segment covering 646 to 656 (RPPPLAPPPWG) has biased composition (pro residues). 2 UBZ1-type zinc fingers span residues 716–742 (HKQCPLCEVIFPPHFEQSSFERHVESH) and 743–769 (WRVCPVCSEQFPLDCQQQLYEKHVHTH). Cys-719, Cys-722, His-738, His-742, Cys-746, Cys-749, His-765, and His-769 together coordinate Zn(2+).

As to expression, little expression is observed during pectoral fin development, except for an elevated level of expression in the distal mesenchyme cells of some samples.

May have anti-apoptotic activity. In Danio rerio (Zebrafish), this protein is Tax1-binding protein 1 homolog A.